The chain runs to 851 residues: Alanine--tRNA ligase (851 aa).

Residues histidine 554, histidine 558, cysteine 656, and histidine 660 each coordinate Zn(2+).

This sequence belongs to the class-II aminoacyl-tRNA synthetase family. The cofactor is Zn(2+).

The protein resides in the cytoplasm. It carries out the reaction tRNA(Ala) + L-alanine + ATP = L-alanyl-tRNA(Ala) + AMP + diphosphate. Functionally, catalyzes the attachment of alanine to tRNA(Ala) in a two-step reaction: alanine is first activated by ATP to form Ala-AMP and then transferred to the acceptor end of tRNA(Ala). Also edits incorrectly charged Ser-tRNA(Ala) and Gly-tRNA(Ala) via its editing domain. The polypeptide is Alanine--tRNA ligase (Aliarcobacter butzleri (strain RM4018) (Arcobacter butzleri)).